The following is an 818-amino-acid chain: Response regulator SSK1 (818 aa).

Residues 611-769 enclose the Response regulatory domain; it reads NVLIVEDNPI…WLERKVMEWG (159 aa). Asp-660 carries the post-translational modification 4-aspartylphosphate.

It belongs to the SSK1 family.

Its subcellular location is the cytoplasm. Two-domain response regulator protein in the two-component signal transduction system of the HOG1 pathway. Modulates stress response, melanin biosynthesis and virulence via its regulation of the phosphorylation of HOG1. The chain is Response regulator SSK1 from Verticillium dahliae (strain VdLs.17 / ATCC MYA-4575 / FGSC 10137) (Verticillium wilt).